A 598-amino-acid chain; its full sequence is Pantothenate kinase 1 (598 aa).

A disordered region spans residues 32-161 (ARPGDQGKAG…SPGAPVGTSA (130 aa)). A compositionally biased stretch (gly residues) spans 38 to 49 (GKAGGGSPGWGC). A Phosphoserine modification is found at serine 215. The Nucleolar localization signal signature appears at 218–235 (KKCRLRRRMDSGRKNRPP). The active-site Proton acceptor is the glutamate 363. 3 residues coordinate acetyl-CoA: serine 417, serine 420, and arginine 432.

The protein belongs to the type II pantothenate kinase family. Homodimer. Expressed at high levels in brain, heart, kidney, liver, skeletal muscle and testis. As to expression, detected at much lower levels in kidney, liver, brain and testis and not detected in heart or skeletal muscle.

Its subcellular location is the cytoplasm. It is found in the nucleus. The protein localises to the nucleolus. The protein resides in the cytosol. It localises to the cytoplasmic vesicle. Its subcellular location is the clathrin-coated vesicle. It is found in the recycling endosome. The catalysed reaction is (R)-pantothenate + ATP = (R)-4'-phosphopantothenate + ADP + H(+). Its pathway is cofactor biosynthesis; coenzyme A biosynthesis; CoA from (R)-pantothenate: step 1/5. Regulated by feedback inhibition by CoA and its thioesters. Catalyzes the phosphorylation of pantothenate to generate 4'-phosphopantothenate in the first and rate-determining step of coenzyme A (CoA) synthesis. The chain is Pantothenate kinase 1 (PANK1) from Homo sapiens (Human).